The following is a 236-amino-acid chain: Phosphoribosylaminoimidazole-succinocarboxamide synthase (236 aa).

This sequence belongs to the SAICAR synthetase family.

The catalysed reaction is 5-amino-1-(5-phospho-D-ribosyl)imidazole-4-carboxylate + L-aspartate + ATP = (2S)-2-[5-amino-1-(5-phospho-beta-D-ribosyl)imidazole-4-carboxamido]succinate + ADP + phosphate + 2 H(+). It functions in the pathway purine metabolism; IMP biosynthesis via de novo pathway; 5-amino-1-(5-phospho-D-ribosyl)imidazole-4-carboxamide from 5-amino-1-(5-phospho-D-ribosyl)imidazole-4-carboxylate: step 1/2. In Pseudomonas entomophila (strain L48), this protein is Phosphoribosylaminoimidazole-succinocarboxamide synthase.